The sequence spans 593 residues: Aspartate--tRNA(Asp/Asn) ligase (593 aa).

Glu-175 lines the L-aspartate pocket. Residues 199-202 are aspartate; that stretch reads QQYK. L-aspartate contacts are provided by Arg-221 and His-452. An ATP-binding site is contributed by 221–223; that stretch reads RDE. Glu-486 contributes to the ATP binding site. L-aspartate is bound at residue Arg-493. 538 to 541 serves as a coordination point for ATP; sequence GVDR.

The protein belongs to the class-II aminoacyl-tRNA synthetase family. Type 1 subfamily. In terms of assembly, homodimer.

The protein localises to the cytoplasm. It carries out the reaction tRNA(Asx) + L-aspartate + ATP = L-aspartyl-tRNA(Asx) + AMP + diphosphate. In terms of biological role, aspartyl-tRNA synthetase with relaxed tRNA specificity since it is able to aspartylate not only its cognate tRNA(Asp) but also tRNA(Asn). Reaction proceeds in two steps: L-aspartate is first activated by ATP to form Asp-AMP and then transferred to the acceptor end of tRNA(Asp/Asn). The protein is Aspartate--tRNA(Asp/Asn) ligase of Novosphingobium aromaticivorans (strain ATCC 700278 / DSM 12444 / CCUG 56034 / CIP 105152 / NBRC 16084 / F199).